The following is a 477-amino-acid chain: Glycogen synthase (477 aa).

K15 contributes to the ADP-alpha-D-glucose binding site.

This sequence belongs to the glycosyltransferase 1 family. Bacterial/plant glycogen synthase subfamily.

It catalyses the reaction [(1-&gt;4)-alpha-D-glucosyl](n) + ADP-alpha-D-glucose = [(1-&gt;4)-alpha-D-glucosyl](n+1) + ADP + H(+). The protein operates within glycan biosynthesis; glycogen biosynthesis. Its function is as follows. Synthesizes alpha-1,4-glucan chains using ADP-glucose. This chain is Glycogen synthase, found in Shigella dysenteriae serotype 1 (strain Sd197).